Reading from the N-terminus, the 101-residue chain is Urease subunit beta (101 aa).

This sequence belongs to the urease beta subunit family. Heterotrimer of UreA (gamma), UreB (beta) and UreC (alpha) subunits. Three heterotrimers associate to form the active enzyme.

The protein resides in the cytoplasm. The enzyme catalyses urea + 2 H2O + H(+) = hydrogencarbonate + 2 NH4(+). It functions in the pathway nitrogen metabolism; urea degradation; CO(2) and NH(3) from urea (urease route): step 1/1. This chain is Urease subunit beta, found in Dechloromonas aromatica (strain RCB).